The chain runs to 139 residues: Large-conductance mechanosensitive channel (139 aa).

The next 2 membrane-spanning stretches (helical) occupy residues 9–29 (AFAV…GAAF) and 79–99 (IQTV…VKAI).

The protein belongs to the MscL family. In terms of assembly, homopentamer.

The protein localises to the cell inner membrane. Its function is as follows. Channel that opens in response to stretch forces in the membrane lipid bilayer. May participate in the regulation of osmotic pressure changes within the cell. The polypeptide is Large-conductance mechanosensitive channel (Pseudomonas putida (strain W619)).